The chain runs to 205 residues: Holliday junction branch migration complex subunit RuvA (205 aa).

Positions 1 to 64 are domain I; sequence MIAHLRGELV…EDALTLYGFL (64 aa). Positions 65–143 are domain II; the sequence is TQAEYDLFEL…AVPAGGGGVP (79 aa). The interval 144–153 is flexible linker; that stretch reads DGLPVAVAPA. The segment at 153–205 is domain III; that stretch reads AGDAWAEASEALIALGYSRGEAAAALARVRAEAGEAPSVETLVRLALKQLYRG.

The protein belongs to the RuvA family. In terms of assembly, homotetramer. Forms an RuvA(8)-RuvB(12)-Holliday junction (HJ) complex. HJ DNA is sandwiched between 2 RuvA tetramers; dsDNA enters through RuvA and exits via RuvB. An RuvB hexamer assembles on each DNA strand where it exits the tetramer. Each RuvB hexamer is contacted by two RuvA subunits (via domain III) on 2 adjacent RuvB subunits; this complex drives branch migration. In the full resolvosome a probable DNA-RuvA(4)-RuvB(12)-RuvC(2) complex forms which resolves the HJ.

The protein resides in the cytoplasm. Functionally, the RuvA-RuvB-RuvC complex processes Holliday junction (HJ) DNA during genetic recombination and DNA repair, while the RuvA-RuvB complex plays an important role in the rescue of blocked DNA replication forks via replication fork reversal (RFR). RuvA specifically binds to HJ cruciform DNA, conferring on it an open structure. The RuvB hexamer acts as an ATP-dependent pump, pulling dsDNA into and through the RuvAB complex. HJ branch migration allows RuvC to scan DNA until it finds its consensus sequence, where it cleaves and resolves the cruciform DNA. The chain is Holliday junction branch migration complex subunit RuvA from Symbiobacterium thermophilum (strain DSM 24528 / JCM 14929 / IAM 14863 / T).